Here is a 396-residue protein sequence, read N- to C-terminus: Tryptophan synthase beta chain (396 aa).

N6-(pyridoxal phosphate)lysine is present on K88.

The protein belongs to the TrpB family. In terms of assembly, tetramer of two alpha and two beta chains. Pyridoxal 5'-phosphate serves as cofactor.

It carries out the reaction (1S,2R)-1-C-(indol-3-yl)glycerol 3-phosphate + L-serine = D-glyceraldehyde 3-phosphate + L-tryptophan + H2O. It functions in the pathway amino-acid biosynthesis; L-tryptophan biosynthesis; L-tryptophan from chorismate: step 5/5. Functionally, the beta subunit is responsible for the synthesis of L-tryptophan from indole and L-serine. The chain is Tryptophan synthase beta chain from Leptospira biflexa serovar Patoc (strain Patoc 1 / Ames).